The primary structure comprises 23 residues: Cysteine-rich venom protein 24 (23 aa).

Positions 1 to 23 (VDFASESXNKRENQQIVDKHNAL) are disordered. A compositionally biased stretch (basic and acidic residues) spans 8–23 (XNKRENQQIVDKHNAL).

The protein belongs to the CRISP family. Contains 8 disulfide bonds. In terms of tissue distribution, expressed by the venom gland.

The protein resides in the secreted. This Naja kaouthia (Monocled cobra) protein is Cysteine-rich venom protein 24.